The primary structure comprises 329 residues: DNA-directed RNA polymerase subunit alpha (329 aa).

Residues 1 to 234 (MQGSVTEFLR…EQLDAFVELR (234 aa)) are alpha N-terminal domain (alpha-NTD). Residues 248-329 (FDPILLRPVD…WPPASLVDDL (82 aa)) form an alpha C-terminal domain (alpha-CTD) region.

The protein belongs to the RNA polymerase alpha chain family. In terms of assembly, homodimer. The RNAP catalytic core consists of 2 alpha, 1 beta, 1 beta' and 1 omega subunit. When a sigma factor is associated with the core the holoenzyme is formed, which can initiate transcription.

The catalysed reaction is RNA(n) + a ribonucleoside 5'-triphosphate = RNA(n+1) + diphosphate. Its function is as follows. DNA-dependent RNA polymerase catalyzes the transcription of DNA into RNA using the four ribonucleoside triphosphates as substrates. This Shewanella violacea (strain JCM 10179 / CIP 106290 / LMG 19151 / DSS12) protein is DNA-directed RNA polymerase subunit alpha.